We begin with the raw amino-acid sequence, 215 residues long: PRELI domain-containing protein 1, mitochondrial (215 aa).

Positions 36-174 (TEDIVHREVT…VLARMQGEAP (139 aa)) constitute a PRELI/MSF1 domain.

Forms a complex with TRIAP1 in the mitochondrion intermembrane space. As to expression, expressed within the blood islands and in the liver.

The protein localises to the mitochondrion. It is found in the mitochondrion intermembrane space. The catalysed reaction is a 1,2-diacyl-sn-glycero-3-phosphate(in) = a 1,2-diacyl-sn-glycero-3-phosphate(out). Involved in the modulation of the mitochondrial apoptotic pathway by ensuring the accumulation of cardiolipin (CL) in mitochondrial membranes. The TRIAP1:PRELID1 complex probably functions as a PA transporter across the mitochondrion intermembrane space to provide PA for CL synthesis in the inner membrane. May be involved in hematopoiesis during avian development. The chain is PRELI domain-containing protein 1, mitochondrial (PRELID1) from Gallus gallus (Chicken).